We begin with the raw amino-acid sequence, 176 residues long: Isopentenyl-diphosphate Delta-isomerase (176 aa).

The Mn(2+) site is built by histidine 23 and histidine 29. Residues leucine 27–isoleucine 161 enclose the Nudix hydrolase domain. The active site involves cysteine 63. Cysteine 63 is a Mg(2+) binding site. Histidine 65 is a binding site for Mn(2+). Residue glutamate 83 coordinates Mg(2+). Mn(2+) contacts are provided by glutamate 109 and glutamate 111. Residue glutamate 111 is part of the active site.

The protein belongs to the IPP isomerase type 1 family. The cofactor is Mg(2+). Mn(2+) serves as cofactor.

The protein localises to the cytoplasm. The enzyme catalyses isopentenyl diphosphate = dimethylallyl diphosphate. It functions in the pathway isoprenoid biosynthesis; dimethylallyl diphosphate biosynthesis; dimethylallyl diphosphate from isopentenyl diphosphate: step 1/1. It participates in porphyrin-containing compound metabolism; chlorophyll biosynthesis. Catalyzes the 1,3-allylic rearrangement of the homoallylic substrate isopentenyl (IPP) to its highly electrophilic allylic isomer, dimethylallyl diphosphate (DMAPP). This Rhodobacter capsulatus (strain ATCC BAA-309 / NBRC 16581 / SB1003) protein is Isopentenyl-diphosphate Delta-isomerase.